A 330-amino-acid polypeptide reads, in one-letter code: Phytanoyl-CoA hydroxylase-interacting protein (330 aa).

A Fibronectin type-III domain is found at 6–115 (TPHSIEINNI…ETVEFCTGDY (110 aa)). 2 N-linked (GlcNAc...) asparagine glycosylation sites follow: asparagine 14 and asparagine 325.

The protein belongs to the PHYHIP family. As to quaternary structure, interacts with PHYH and ADGRB1. In terms of tissue distribution, highly expressed in the brain.

Functionally, its interaction with PHYH suggests a role in the development of the central system. In Mus musculus (Mouse), this protein is Phytanoyl-CoA hydroxylase-interacting protein (Phyhip).